A 145-amino-acid chain; its full sequence is Large ribosomal subunit protein uL11 (145 aa).

Belongs to the universal ribosomal protein uL11 family. Part of the ribosomal stalk of the 50S ribosomal subunit. Interacts with L10 and the large rRNA to form the base of the stalk. L10 forms an elongated spine to which L12 dimers bind in a sequential fashion forming a multimeric L10(L12)X complex. One or more lysine residues are methylated.

Functionally, forms part of the ribosomal stalk which helps the ribosome interact with GTP-bound translation factors. The protein is Large ribosomal subunit protein uL11 of Corynebacterium glutamicum (strain ATCC 13032 / DSM 20300 / JCM 1318 / BCRC 11384 / CCUG 27702 / LMG 3730 / NBRC 12168 / NCIMB 10025 / NRRL B-2784 / 534).